Here is a 420-residue protein sequence, read N- to C-terminus: 3-phosphoshikimate 1-carboxyvinyltransferase (420 aa).

Residues Lys-26, Ser-27, and Arg-31 each coordinate 3-phosphoshikimate. Lys-26 lines the phosphoenolpyruvate pocket. Positions 97 and 125 each coordinate phosphoenolpyruvate. Residues Ser-170, Ser-171, Gln-172, Asp-297, Asn-320, and Lys-324 each coordinate 3-phosphoshikimate. Gln-172 provides a ligand contact to phosphoenolpyruvate. The Proton acceptor role is filled by Asp-297. Residues Arg-328, Arg-375, and Lys-400 each coordinate phosphoenolpyruvate.

This sequence belongs to the EPSP synthase family. As to quaternary structure, monomer.

The protein localises to the cytoplasm. The catalysed reaction is 3-phosphoshikimate + phosphoenolpyruvate = 5-O-(1-carboxyvinyl)-3-phosphoshikimate + phosphate. It functions in the pathway metabolic intermediate biosynthesis; chorismate biosynthesis; chorismate from D-erythrose 4-phosphate and phosphoenolpyruvate: step 6/7. In terms of biological role, catalyzes the transfer of the enolpyruvyl moiety of phosphoenolpyruvate (PEP) to the 5-hydroxyl of shikimate-3-phosphate (S3P) to produce enolpyruvyl shikimate-3-phosphate and inorganic phosphate. The sequence is that of 3-phosphoshikimate 1-carboxyvinyltransferase from Rhizobium leguminosarum bv. trifolii (strain WSM2304).